The primary structure comprises 287 residues: MIKIGAHMPISKGFDRVPQDTVNIGGNSFQIFPHNARSWGAKLPSDEVATKFKREMKKNGIDWENAFCHSGYLINLASPKEDIWQKSVELLKKEVEICRKLGIRYLNIHPGSHLGTGEEEGIDRIVRGLNEVLNNTEGVVILLENVSQKGGNIGYKLEQLKKIRDLVDQKDRVAVTYDTCHGFDSGYDITKKEGVEALLNEIETLFGLERLKMIHLNDSKYPLGAAKDRHERIGSGFIGEEGFAVFFSFKEIQEVPWILETPGGNEEHAEDIKKVFEIIEKFGIEVD.

Zn(2+)-binding residues include His69, His109, Glu144, Asp178, His181, His215, Asp228, His230, and Glu260.

It belongs to the AP endonuclease 2 family. Requires Zn(2+) as cofactor.

The enzyme catalyses Endonucleolytic cleavage to 5'-phosphooligonucleotide end-products.. Its function is as follows. Endonuclease IV plays a role in DNA repair. It cleaves phosphodiester bonds at apurinic or apyrimidinic (AP) sites, generating a 3'-hydroxyl group and a 5'-terminal sugar phosphate. The chain is Probable endonuclease 4 from Thermotoga sp. (strain RQ2).